We begin with the raw amino-acid sequence, 100 residues long: NAD(P)H-quinone oxidoreductase subunit 4L, chloroplastic (100 aa).

The next 3 membrane-spanning stretches (helical) occupy residues 1–21 (MFGH…YGLI), 29–49 (ALMC…TFPN), and 63–83 (VFVI…VLAI).

It belongs to the complex I subunit 4L family. As to quaternary structure, NDH is composed of at least 16 different subunits, 5 of which are encoded in the nucleus.

It is found in the plastid. It localises to the chloroplast thylakoid membrane. It carries out the reaction a plastoquinone + NADH + (n+1) H(+)(in) = a plastoquinol + NAD(+) + n H(+)(out). It catalyses the reaction a plastoquinone + NADPH + (n+1) H(+)(in) = a plastoquinol + NADP(+) + n H(+)(out). Its function is as follows. NDH shuttles electrons from NAD(P)H:plastoquinone, via FMN and iron-sulfur (Fe-S) centers, to quinones in the photosynthetic chain and possibly in a chloroplast respiratory chain. The immediate electron acceptor for the enzyme in this species is believed to be plastoquinone. Couples the redox reaction to proton translocation, and thus conserves the redox energy in a proton gradient. In Huperzia lucidula (Shining clubmoss), this protein is NAD(P)H-quinone oxidoreductase subunit 4L, chloroplastic.